Here is a 338-residue protein sequence, read N- to C-terminus: Glycerol-3-phosphate dehydrogenase [NAD(P)+] (338 aa).

NADPH-binding residues include Ser12, Trp13, and Lys110. The sn-glycerol 3-phosphate site is built by Lys110, Gly141, and Ser143. Ala145 serves as a coordination point for NADPH. Sn-glycerol 3-phosphate is bound by residues Lys196, Asp249, Ser259, Arg260, and Asn261. Lys196 serves as the catalytic Proton acceptor. Arg260 is a binding site for NADPH. NADPH is bound by residues Val284 and Glu286.

This sequence belongs to the NAD-dependent glycerol-3-phosphate dehydrogenase family.

It is found in the cytoplasm. It carries out the reaction sn-glycerol 3-phosphate + NAD(+) = dihydroxyacetone phosphate + NADH + H(+). The catalysed reaction is sn-glycerol 3-phosphate + NADP(+) = dihydroxyacetone phosphate + NADPH + H(+). The protein operates within membrane lipid metabolism; glycerophospholipid metabolism. Its function is as follows. Catalyzes the reduction of the glycolytic intermediate dihydroxyacetone phosphate (DHAP) to sn-glycerol 3-phosphate (G3P), the key precursor for phospholipid synthesis. This Lactiplantibacillus plantarum (strain ATCC BAA-793 / NCIMB 8826 / WCFS1) (Lactobacillus plantarum) protein is Glycerol-3-phosphate dehydrogenase [NAD(P)+].